A 314-amino-acid polypeptide reads, in one-letter code: MVKPVKIGVDAKVEKTKSATAARHHEFQMNKSYGQHLLKNPLIIDAIVDKSQLKSTDTVLEIGPGTGNLTMKLLENCKKVIAIEVDPRMAAELQKRVAASPYAQHLQIILGDFLKVDLPYFDVCVANVPYQISSPLTFKLLAHRPIFRTAVLMFQKEFALRLGAKPGDSLYCRLSVNTQLLSKVTHLMKVGKNNFLPPPKVESAVVRIEPFNPPPPINFVEWDGLVKLCFSRKNKTLSGIFRVSSVIETLNQNYKTYCALEGKMNTDGSDEQMKELIIKTLTDNDFLDSRSSKLDINDFLKLLNKFHETGIHFK.

S-adenosyl-L-methionine-binding residues include His-36, Leu-38, Gly-63, Glu-84, Asp-112, and Asn-127.

This sequence belongs to the class I-like SAM-binding methyltransferase superfamily. rRNA adenine N(6)-methyltransferase family. Part of the small subunit (SSU) processome, composed of more than 70 proteins and the RNA chaperone small nucleolar RNA (snoRNA) U3.

It localises to the nucleus. The protein localises to the nucleoplasm. Its subcellular location is the nucleolus. It catalyses the reaction adenosine(1779)/adenosine(1780) in 18S rRNA + 4 S-adenosyl-L-methionine = N(6)-dimethyladenosine(1779)/N(6)-dimethyladenosine(1780) in 18S rRNA + 4 S-adenosyl-L-homocysteine + 4 H(+). In terms of biological role, specifically dimethylates two adjacent adenosines in the loop of a conserved hairpin near the 3'-end of 18S rRNA in the 40S particle. Involved in the pre-rRNA processing steps leading to small-subunit rRNA production independently of its RNA-modifying catalytic activity. Part of the small subunit (SSU) processome, first precursor of the small eukaryotic ribosomal subunit. During the assembly of the SSU processome in the nucleolus, many ribosome biogenesis factors, an RNA chaperone and ribosomal proteins associate with the nascent pre-rRNA and work in concert to generate RNA folding, modifications, rearrangements and cleavage as well as targeted degradation of pre-ribosomal RNA by the RNA exosome. The sequence is that of Probable dimethyladenosine transferase (dimt1) from Dictyostelium discoideum (Social amoeba).